A 187-amino-acid chain; its full sequence is Large ribosomal subunit protein bL21 (187 aa).

The tract at residues 157-187 (KVAKKAVKKTVKKATKTGAKKKAAKKTSKKA) is disordered.

This sequence belongs to the bacterial ribosomal protein bL21 family. Part of the 50S ribosomal subunit. Contacts protein L20.

Its function is as follows. This protein binds to 23S rRNA in the presence of protein L20. This is Large ribosomal subunit protein bL21 from Bdellovibrio bacteriovorus (strain ATCC 15356 / DSM 50701 / NCIMB 9529 / HD100).